Here is a 59-residue protein sequence, read N- to C-terminus: Large ribosomal subunit protein uL30 (59 aa).

It belongs to the universal ribosomal protein uL30 family. As to quaternary structure, part of the 50S ribosomal subunit.

This is Large ribosomal subunit protein uL30 from Rhodococcus jostii (strain RHA1).